We begin with the raw amino-acid sequence, 358 residues long: Probable tartrate dehydrogenase/decarboxylase TtuC' (358 aa).

3 residues coordinate Mn(2+): aspartate 222, aspartate 246, and aspartate 250.

Belongs to the isocitrate and isopropylmalate dehydrogenases family. Mg(2+) is required as a cofactor. It depends on Mn(2+) as a cofactor. The cofactor is K(+).

Its subcellular location is the cytoplasm. It carries out the reaction tartrate + NAD(+) = 2-hydroxy-3-oxosuccinate + NADH + H(+). The enzyme catalyses (2R,3S)-tartrate + NAD(+) = 2-hydroxy-3-oxosuccinate + NADH + H(+). It catalyses the reaction (2R,3R)-tartrate + NAD(+) = 2-hydroxy-3-oxosuccinate + NADH + H(+). The catalysed reaction is (2R,3R)-tartrate + H(+) = (R)-glycerate + CO2. It carries out the reaction (R)-malate + NAD(+) = pyruvate + CO2 + NADH. It participates in carbohydrate acid metabolism; tartrate degradation; 2-hydroxy-3-oxosuccinate from L-tartrate: step 1/1. The protein operates within carbohydrate acid metabolism; tartrate degradation; 2-hydroxy-3-oxosuccinate from meso-tartrate: step 1/1. Its pathway is carbohydrate acid metabolism; tartrate degradation; D-glycerate from L-tartrate: step 1/1. Functionally, has multiple catalytic activities. Apart from catalyzing the oxidation of (+)-tartrate to oxaloglycolate, also converts meso-tartrate to D-glycerate and catalyzes the oxidative decarboxylation of D-malate to pyruvate. The chain is Probable tartrate dehydrogenase/decarboxylase TtuC' (ttuC') from Agrobacterium vitis (Rhizobium vitis).